A 185-amino-acid polypeptide reads, in one-letter code: HTH-type transcriptional regulator Hpr (185 aa).

In terms of domain architecture, HTH marR-type spans 13–157; it reads AMIFSQRIAQ…LIAILRNIYG (145 aa). The segment at residues 63 to 86 is a DNA-binding region (H-T-H motif); sequence ISEIAKFGVMHVSTAFNFSKKLEE.

Homodimer.

In terms of biological role, negative regulator of protease production and sporulation. The chain is HTH-type transcriptional regulator Hpr from Bacillus anthracis (strain CDC 684 / NRRL 3495).